The primary structure comprises 1755 residues: Transposon Ty1-ML2 Gag-Pol polyprotein (1755 aa).

Residues 1–16 (MESQQLSQHSHISHGS) show a composition bias toward low complexity. Disordered regions lie at residues 1–93 (MESQ…MMTQ), 126–173 (PQSQ…RPPP), and 352–421 (GSRN…SKST). Composition is skewed to polar residues over residues 48 to 60 (TKANSQQTTTPAS) and 127 to 152 (QSQFPQYPSSVGTPLSTPSPESGNTF). The span at 153 to 165 (TDSSSADSDMTST) shows a compositional bias: low complexity. Residues 299-401 (NNGIHINNKV…NSKSKTARAH (103 aa)) form an RNA-binding region. Low complexity predominate over residues 402 to 418 (NVSTSNNSPSTDNDSIS). At serine 416 the chain carries Phosphoserine. Residue aspartate 461 is the For protease activity; shared with dimeric partner of the active site. The integrase-type zinc finger-like stretch occupies residues 583-640 (NVHTSESTRKYPYPFIHRMLAHANAQTIRYSLKNNTITYFNESDVDRSSAIDYQCPDC). An Integrase catalytic domain is found at 660–835 (NSYEPFQYLH…AGLDISTLLP (176 aa)). Positions 671 and 736 each coordinate Mg(2+). 3 disordered regions span residues 956–1087 (SKAV…ETEK), 1092–1111 (RSPSIDASPPENNSSHNIVP), and 1130–1171 (DLPL…DSNA). Positions 960-969 (SPTDSTPPST) are enriched in low complexity. Residues 1005 to 1015 (STPQISNIEST) are compositionally biased toward polar residues. Residues 1038-1053 (ESSHASKSKDFRHSDS) show a composition bias toward basic and acidic residues. Composition is skewed to polar residues over residues 1054-1082 (YSENETNHTNVPISSTGGTNNKTVPQISD) and 1101-1111 (PENNSSHNIVP). The Bipartite nuclear localization signal motif lies at 1178–1212 (KKRSLEDNETEIKVSRDTWNTKNMRSLEPPRSKKR). Residues 1338–1476 (NNYYITQLDI…DILGLEIKYQ (139 aa)) enclose the Reverse transcriptase Ty1/copia-type domain. 6 residues coordinate Mg(2+): aspartate 1346, aspartate 1427, aspartate 1428, aspartate 1610, glutamate 1652, and aspartate 1685. An RNase H Ty1/copia-type domain is found at 1610–1752 (DASYGNQPYY…IKTFKLLTNK (143 aa)).

As to quaternary structure, the capsid protein forms a homotrimer, from which the VLPs are assembled. The protease is a homodimer, whose active site consists of two apposed aspartic acid residues. Initially, virus-like particles (VLPs) are composed of the structural unprocessed proteins Gag and Gag-Pol, and also contain the host initiator methionine tRNA (tRNA(i)-Met) which serves as a primer for minus-strand DNA synthesis, and a dimer of genomic Ty RNA. Processing of the polyproteins occurs within the particle and proceeds by an ordered pathway, called maturation. First, the protease (PR) is released by autocatalytic cleavage of the Gag-Pol polyprotein yielding capsid protein p45 and a Pol-p154 precursor protein. This cleavage is a prerequisite for subsequent processing of Pol-p154 at the remaining sites to release the mature structural and catalytic proteins. Maturation takes place prior to the RT reaction and is required to produce transposition-competent VLPs.

It is found in the cytoplasm. It localises to the nucleus. The catalysed reaction is DNA(n) + a 2'-deoxyribonucleoside 5'-triphosphate = DNA(n+1) + diphosphate. It carries out the reaction Endonucleolytic cleavage to 5'-phosphomonoester.. Functionally, capsid protein (CA) is the structural component of the virus-like particle (VLP), forming the shell that encapsulates the retrotransposons dimeric RNA genome. The particles are assembled from trimer-clustered units and there are holes in the capsid shells that allow for the diffusion of macromolecules. CA also has nucleocapsid-like chaperone activity, promoting primer tRNA(i)-Met annealing to the multipartite primer-binding site (PBS), dimerization of Ty1 RNA and initiation of reverse transcription. In terms of biological role, the aspartyl protease (PR) mediates the proteolytic cleavages of the Gag and Gag-Pol polyproteins after assembly of the VLP. Its function is as follows. Reverse transcriptase/ribonuclease H (RT) is a multifunctional enzyme that catalyzes the conversion of the retro-elements RNA genome into dsDNA within the VLP. The enzyme displays a DNA polymerase activity that can copy either DNA or RNA templates, and a ribonuclease H (RNase H) activity that cleaves the RNA strand of RNA-DNA heteroduplexes during plus-strand synthesis and hydrolyzes RNA primers. The conversion leads to a linear dsDNA copy of the retrotransposon that includes long terminal repeats (LTRs) at both ends. Integrase (IN) targets the VLP to the nucleus, where a subparticle preintegration complex (PIC) containing at least integrase and the newly synthesized dsDNA copy of the retrotransposon must transit the nuclear membrane. Once in the nucleus, integrase performs the integration of the dsDNA into the host genome. The protein is Transposon Ty1-ML2 Gag-Pol polyprotein (TY1B-ML2) of Saccharomyces cerevisiae (strain ATCC 204508 / S288c) (Baker's yeast).